Consider the following 472-residue polypeptide: MDYLPLFADLKQRPVLIVGGGEVAARKIELLHRAGAQVWVVAQTLSSELEQQYQDGRIHWLAQDFLPEQLDNVFLVIAATNDTVLNAAVFAAADQRCILANVVDDQPLCSFIFPSIVDRSPLVVAISSSGQAPVLARILREKLEALLPTRLSDMAAIAGRWRGRVKQHMASMGERRRFWEHAFSGRFASLISRGQLTEAENELQLSLEGQHRALGEVALVGAGPGDAGLLTLRGLQVMQQADVVLYDHLVSPEVLDLVRRDAERICVGKRAGAHSVTQEATNQLLVTLAQQGKRVVRLKGGDPFIFGRGGEELQVVAQAGIPFQVVPGVTAAAGATAYAGIPLTHRDHAQSVTFITGHCRPDGDDLDWQALARGRQTLAIYMGTVKAAAISQQLIAHGRSSTTPVAVIGRGTRVDQQVLIGTLAQLESLAQQAPTPALLVIGEVVNLHHQIAWFGQQPQTESAISPSVVNLA.

Residues 1 to 203 are precorrin-2 dehydrogenase /sirohydrochlorin ferrochelatase; that stretch reads MDYLPLFADL…GQLTEAENEL (203 aa). Residues 22–23 and 43–44 contribute to the NAD(+) site; these read EV and QT. A Phosphoserine modification is found at Ser128. Residues 215-472 are uroporphyrinogen-III C-methyltransferase; that stretch reads GEVALVGAGP…AISPSVVNLA (258 aa). Pro224 contributes to the S-adenosyl-L-methionine binding site. Asp247 functions as the Proton acceptor in the catalytic mechanism. The active-site Proton donor is the Lys269. Residues 300–302, Ile305, 330–331, Met382, and Gly411 each bind S-adenosyl-L-methionine; these read GGD and TA.

In the N-terminal section; belongs to the precorrin-2 dehydrogenase / sirohydrochlorin ferrochelatase family. It in the C-terminal section; belongs to the precorrin methyltransferase family.

It carries out the reaction uroporphyrinogen III + 2 S-adenosyl-L-methionine = precorrin-2 + 2 S-adenosyl-L-homocysteine + H(+). The catalysed reaction is precorrin-2 + NAD(+) = sirohydrochlorin + NADH + 2 H(+). The enzyme catalyses siroheme + 2 H(+) = sirohydrochlorin + Fe(2+). The protein operates within cofactor biosynthesis; adenosylcobalamin biosynthesis; precorrin-2 from uroporphyrinogen III: step 1/1. It participates in cofactor biosynthesis; adenosylcobalamin biosynthesis; sirohydrochlorin from precorrin-2: step 1/1. It functions in the pathway porphyrin-containing compound metabolism; siroheme biosynthesis; precorrin-2 from uroporphyrinogen III: step 1/1. Its pathway is porphyrin-containing compound metabolism; siroheme biosynthesis; siroheme from sirohydrochlorin: step 1/1. The protein operates within porphyrin-containing compound metabolism; siroheme biosynthesis; sirohydrochlorin from precorrin-2: step 1/1. Functionally, multifunctional enzyme that catalyzes the SAM-dependent methylations of uroporphyrinogen III at position C-2 and C-7 to form precorrin-2 via precorrin-1. Then it catalyzes the NAD-dependent ring dehydrogenation of precorrin-2 to yield sirohydrochlorin. Finally, it catalyzes the ferrochelation of sirohydrochlorin to yield siroheme. This Yersinia pseudotuberculosis serotype I (strain IP32953) protein is Siroheme synthase 1.